The sequence spans 41 residues: ORF3c protein (41 aa).

In terms of biological role, may play a role in host modulation. The polypeptide is ORF3c protein (Severe acute respiratory syndrome coronavirus 2 (2019-nCoV)).